Consider the following 486-residue polypeptide: Glycogen synthase 2 (486 aa).

Residue Lys-15 coordinates ADP-alpha-D-glucose.

The protein belongs to the glycosyltransferase 1 family. Bacterial/plant glycogen synthase subfamily.

The catalysed reaction is [(1-&gt;4)-alpha-D-glucosyl](n) + ADP-alpha-D-glucose = [(1-&gt;4)-alpha-D-glucosyl](n+1) + ADP + H(+). It participates in glycan biosynthesis; glycogen biosynthesis. In terms of biological role, synthesizes alpha-1,4-glucan chains using ADP-glucose. This chain is Glycogen synthase 2 (glgA2), found in Rhizobium meliloti (strain 1021) (Ensifer meliloti).